A 268-amino-acid polypeptide reads, in one-letter code: Tryptophan synthase alpha chain (268 aa).

Catalysis depends on proton acceptor residues Glu-49 and Asp-60.

The protein belongs to the TrpA family. As to quaternary structure, tetramer of two alpha and two beta chains.

It catalyses the reaction (1S,2R)-1-C-(indol-3-yl)glycerol 3-phosphate + L-serine = D-glyceraldehyde 3-phosphate + L-tryptophan + H2O. It participates in amino-acid biosynthesis; L-tryptophan biosynthesis; L-tryptophan from chorismate: step 5/5. The alpha subunit is responsible for the aldol cleavage of indoleglycerol phosphate to indole and glyceraldehyde 3-phosphate. This chain is Tryptophan synthase alpha chain, found in Pseudomonas aeruginosa (strain ATCC 15692 / DSM 22644 / CIP 104116 / JCM 14847 / LMG 12228 / 1C / PRS 101 / PAO1).